Reading from the N-terminus, the 425-residue chain is Histone-binding protein RBBP4 (425 aa).

The residue at position 2 (alanine 2) is an N-acetylalanine. 7 WD repeats span residues 32–125 (YDLV…NHEG), 126–175 (EVNR…RLRG), 176–223 (HQKE…KTIF), 225–270 (GHTA…HSVD), 271–314 (AHTA…HSFE), 315–371 (SHKD…FIHG), and 372–404 (GHTAKISDFSWNPNEPWVICSVSEDNIMQVWQM).

It belongs to the WD repeat RBAP46/RBAP48/MSI1 family. As to quaternary structure, binds directly to histone H4, probably via helix 1 of the histone fold, a region that is not accessible when histone H4 is in chromatin. Forms a large corepressor complex that contains ncor1, sin3a and possibly sin3b, histone deacetylases hdac2, hdac1, rbbp4 and possibly rbbp7.

The protein resides in the nucleus. The protein localises to the chromosome. Its subcellular location is the telomere. Its function is as follows. Core histone-binding subunit that may target chromatin assembly factors, chromatin remodeling factors and histone deacetylases to their histone substrates in a manner that is regulated by nucleosomal DNA. Component of several complexes which regulate chromatin metabolism. In Xenopus tropicalis (Western clawed frog), this protein is Histone-binding protein RBBP4 (rbbp4).